Reading from the N-terminus, the 1107-residue chain is RNA-dependent RNA polymerase 1 (1107 aa).

The protein belongs to the RdRP family.

The enzyme catalyses RNA(n) + a ribonucleoside 5'-triphosphate = RNA(n+1) + diphosphate. Its function is as follows. RNA-dependent direct polymerase involved in antiviral silencing. Required for the production of some small RNAs (mainly 21 and some 22 nucleotides) derived from the crucifer-infecting tobamovirus (TMV-cg). Required for turnip mosaic virus (TuMV) silencing and accumulation of viral siRNAs. Involved in cucumber mosaic virus (CMV) silencing. Required for the biogenesis of viral secondary siRNAs, process that follows the production of primary siRNAs derived from viral RNA replication. Specifically targets the positive-strand of the 3 RNA genomes of CMV and preferentially amplifies the 5'-terminal siRNAs of each viral genomic RNA. Not involved in the production of siRNAs derived from a single-stranded 336-nucleotide satellite RNA of CMV. The chain is RNA-dependent RNA polymerase 1 (RDR1) from Arabidopsis thaliana (Mouse-ear cress).